The primary structure comprises 97 residues: MPPKESPFKVNLKIIPSARKNELAGYENGLLKLKIAAQPEKGKANKELIDYLSDLLDTPKAEIEICHGHTGRNKVLAFFTLSQADFEAKISAALHGS.

This sequence belongs to the UPF0235 family.

The polypeptide is UPF0235 protein cbdbA1230 (Dehalococcoides mccartyi (strain CBDB1)).